Consider the following 346-residue polypeptide: Acrosin (346 aa).

The signal sequence occupies residues 1-19 (MALLLPLAVLLAACRPGHG). 6 disulfide bridges follow: Cys24–Cys146, Cys27–Cys154, Cys70–Cys86, Cys168–Cys240, Cys203–Cys219, and Cys230–Cys260. The region spanning 41–284 (VVGGTEALHG…FYNWILLQVR (244 aa)) is the Peptidase S1 domain. The active-site Charge relay system is the His85. The N-linked (GlcNAc...) asparagine glycan is linked to Asn128. The Charge relay system role is filled by Asp134. N-linked (GlcNAc...) asparagine glycosylation occurs at Asn204. Catalysis depends on Ser234, which acts as the Charge relay system. The propeptide occupies 266 to 346 (PGIYTSTQHF…LLQSLWGSKA (81 aa)).

It belongs to the peptidase S1 family. As to quaternary structure, heavy chain (catalytic) and a light chain linked by two disulfide bonds. Glycosylated.

It carries out the reaction Preferential cleavage: Arg-|-Xaa, Lys-|-Xaa.. Its activity is regulated as follows. Inhibited by aprotinin, ovomucoid, soybean trypsin inhibitor, benzamidine, p-aminobenzamidine, and zinc ions. Activity also inhibited by a Kazal-type proteinase inhibitor. Its function is as follows. Serine protease of trypsin-like cleavage specificity. Synthesized in a zymogen form, proacrosin and stored in the acrosome. The polypeptide is Acrosin (Meleagris gallopavo (Wild turkey)).